We begin with the raw amino-acid sequence, 329 residues long: G-protein coupled bile acid receptor 1 (329 aa).

The Extracellular portion of the chain corresponds to 1–15; that stretch reads MMTPNSTELSAIPMG. Asn-5 is a glycosylation site (N-linked (GlcNAc...) asparagine). A helical membrane pass occupies residues 16 to 36; sequence VLGLSLALASLIVIANLLLAL. At 37–49 the chain is on the cytoplasmic side; that stretch reads GIALDRHLRSPPA. A helical transmembrane segment spans residues 50–70; it reads GCFFLSLLLAGLLTGLALPML. Over 71–84 the chain is Extracellular; it reads PGLWSRNHQGYWSC. Cysteines 84 and 154 form a disulfide. A helical transmembrane segment spans residues 85-105; it reads LLLHLTPNFCFLSLLANLLLV. At 106–124 the chain is on the cytoplasmic side; that stretch reads HGERYMAVLQPLRPHGSVR. A helical membrane pass occupies residues 125–145; the sequence is LALFLTWVSSLFFASLPALGW. At 146 to 164 the chain is on the extracellular side; it reads NHWSPDANCSSQAVFPAPY. Asn-153 is a glycosylation site (N-linked (GlcNAc...) asparagine). A helical transmembrane segment spans residues 165 to 185; sequence LYLEVYGLLLPAVGATALLSV. Topologically, residues 186 to 229 are cytoplasmic; the sequence is RVLATAHRQLCEIRRLERAVCRDVPSTLARALTWRQARAQAGAT. Residues 230 to 250 traverse the membrane as a helical segment; that stretch reads LLFLLCWGPYVATLLLSVLAY. Over 251 to 260 the chain is Extracellular; sequence ERRPPLGPGT. A helical transmembrane segment spans residues 261 to 281; sequence LLSLISLGSTSAAAVPVAMGL. Topologically, residues 282 to 329 are cytoplasmic; the sequence is GDQRYTAPWRTAAQRCLRVLRGRAKRDNPGPSTAYHTSSQCSIDLDLN.

This sequence belongs to the G-protein coupled receptor 1 family.

It localises to the cell membrane. Its function is as follows. Receptor for bile acid. Bile acid-binding induces its internalization, activation of extracellular signal-regulated kinase and intracellular cAMP production. May be involved in the suppression of macrophage functions by bile acids. Involved in bile acid promoted GLP1R secretion. The protein is G-protein coupled bile acid receptor 1 (Gpbar1) of Mus musculus (Mouse).